We begin with the raw amino-acid sequence, 171 residues long: Protein-export protein SecB (171 aa).

This sequence belongs to the SecB family. In terms of assembly, homotetramer, a dimer of dimers. One homotetramer interacts with 1 SecA dimer.

Its subcellular location is the cytoplasm. Functionally, one of the proteins required for the normal export of preproteins out of the cell cytoplasm. It is a molecular chaperone that binds to a subset of precursor proteins, maintaining them in a translocation-competent state. It also specifically binds to its receptor SecA. This chain is Protein-export protein SecB, found in Gluconacetobacter diazotrophicus (strain ATCC 49037 / DSM 5601 / CCUG 37298 / CIP 103539 / LMG 7603 / PAl5).